The chain runs to 1374 residues: Y' element ATP-dependent helicase YLL067C (1374 aa).

The segment at 321–345 is disordered; it reads AGEAASSDHDQKISRVTRKRPREPK. The Helicase ATP-binding domain maps to 375 to 552; sequence EIYMADTPSV…LQRIGLTGLA (178 aa). 388 to 395 is a binding site for ATP; the sequence is APPGYGKT. The DEAH box signature appears at 498-501; the sequence is DEFH. The 150-residue stretch at 609 to 758 folds into the Helicase C-terminal domain; the sequence is KLLLALFEIE…EFYGLESKKG (150 aa). Low complexity predominate over residues 832 to 1011; that stretch reads ANASTNATTN…ATTTESTNAS (180 aa). The segment at 832 to 1035 is disordered; sequence ANASTNATTN…RFHPVTDINK (204 aa). The segment covering 1012–1035 has biased composition (basic and acidic residues); that stretch reads AKEDANKDGNAEDNRFHPVTDINK.

The protein belongs to the helicase family. Yeast subtelomeric Y' repeat subfamily.

In terms of biological role, catalyzes DNA unwinding and is involved in telomerase-independent telomere maintenance. The chain is Y' element ATP-dependent helicase YLL067C from Saccharomyces cerevisiae (strain ATCC 204508 / S288c) (Baker's yeast).